The chain runs to 624 residues: DNA damage response protein Mdb1 (624 aa).

Disordered stretches follow at residues 177-237 (ERIP…DDES), 249-386 (GETK…KNKH), and 591-624 (IGKR…EQRT). Basic and acidic residues-rich tracts occupy residues 200–217 (DEKL…HSSD) and 225–235 (EDQKQLNKTDD). Over residues 250–263 (ETKSPSSVSQSLSG) the composition is skewed to polar residues. A phosphoserine mark is found at serine 253 and serine 283. A compositionally biased stretch (low complexity) spans 294 to 305 (NISDSSIKNNSI). Composition is skewed to basic and acidic residues over residues 306–316 (HSDEVNPEVRP) and 325–352 (EESK…REAE). Over residues 356–386 (ISTNYSFPSSSLEDQPDKNVQSSAVENKNKH) the composition is skewed to polar residues. A BRCT domain is found at 376-468 (QSSAVENKNK…KVLDFRSYKY (93 aa)).

Homodimer. Interacts (via BRCT domain) with hta1 peptide containing the S/T-Q motif in vitro; this interaction requires phosphorylation of the hta1 peptide at the S/T-Q motif.

The protein resides in the nucleus. The protein localises to the chromosome. It is found in the cytoplasm. It localises to the cytoskeleton. Its subcellular location is the spindle. Its function is as follows. Involved in DNA damage response (DDR) mediated through its interaction with phosphorylated H2A proteins hta1 and hta2 which mark the discrete foci of DNA damage. This is DNA damage response protein Mdb1 from Schizosaccharomyces pombe (strain 972 / ATCC 24843) (Fission yeast).